A 444-amino-acid chain; its full sequence is MVKARKTFKIITYGCQMNQRDSEMMADLLQDAGYEPVAREEEAGVIILDTCCVREKAENKVYGKLGQIEKLKSANPDLVIAVAGCMVQQPGVAEKIRQQAPYVDLLLGTGNLQELPQLIEEIKAMHRPRIVVGEQEGPVVEDLPRRRARGAQAFVTITYGCNNFCTYCIVPYVRGRERSRRPENIIKEVKELVDQGVIEVTLLGQNVNSYGRDLRDGINFAGLLERVNAVEGLKRIRYVTSHPRDFTPELVTTISRLDKVCEHVHLPVQAGSNRILELMHRGYTREHYLELVADLRRHIPGISLTTDLIVGFPGETEADFEDTLDLVARVQFDNAFTFMYSPRRGTEAATMPGQLPTAIKKERLKRLMELQNSISLAKNEALVGQEVEVLVEGPSKTDPDQLSGRTRTNKLIIFPGDQSLTGRLVRVRLTRAQTWLLKGEMVDG.

In terms of domain architecture, MTTase N-terminal spans 6-124 (KTFKIITYGC…LPQLIEEIKA (119 aa)). [4Fe-4S] cluster-binding residues include C15, C51, C85, C161, C165, and C168. A Radical SAM core domain is found at 147–377 (RARGAQAFVT…MELQNSISLA (231 aa)). The 64-residue stretch at 380–443 (EALVGQEVEV…TWLLKGEMVD (64 aa)) folds into the TRAM domain.

It belongs to the methylthiotransferase family. MiaB subfamily. In terms of assembly, monomer. [4Fe-4S] cluster is required as a cofactor.

It is found in the cytoplasm. The catalysed reaction is N(6)-dimethylallyladenosine(37) in tRNA + (sulfur carrier)-SH + AH2 + 2 S-adenosyl-L-methionine = 2-methylsulfanyl-N(6)-dimethylallyladenosine(37) in tRNA + (sulfur carrier)-H + 5'-deoxyadenosine + L-methionine + A + S-adenosyl-L-homocysteine + 2 H(+). Catalyzes the methylthiolation of N6-(dimethylallyl)adenosine (i(6)A), leading to the formation of 2-methylthio-N6-(dimethylallyl)adenosine (ms(2)i(6)A) at position 37 in tRNAs that read codons beginning with uridine. In Moorella thermoacetica (strain ATCC 39073 / JCM 9320), this protein is tRNA-2-methylthio-N(6)-dimethylallyladenosine synthase.